The chain runs to 811 residues: MATQFPLSSEFERLTVYGPTRATVSGTPLDAEEVRKIHAFWRACNYLALGMIYLRGNPLLREPLKPEHIKHRLLGHWGSSPNLAFVYTHLNRAIRKHDLDMIFMAGPGHGAPGVLGPLYLEGSYSEIYPDKDLSEEGLLNFFKQFSFPGGIGSHCTPETPGSIHEGGELGYVLSHACGAAFDNPDLIVAAVVGDGEAETGPLATSWHINKFLNPIRDGAVLPILNLNGYKINNPTLLARISHEELENLLRGYGYTPYFVEGSEPESMHQAMAATVDRSIEDIRAAQTEARASGIARRPRWPMIVLRSPKGWTAPRQIDGHNVEGFWRAHQVPVADVAKNPEHLKLLEGWMRSYKPEELFDAEGCPVAEIREMAPAGLRRMGLNPHANGGHLKKALRIPNFRNYGIEVAKPGQIEAPNTQPLGVFLRDVMKENAHNFRLFGPDENTSNKLDAVYAAAKKFWIAEYFPEDQDGGELAPDGRVMEMLSEHTLEGMLEGYLLTGRHGFLSTYEAFVHVIDSMFNQHAKWLSICNQLSWRQDVASLNLLITSTVWRQDHNGFTHQDPGFLDVVVNKSADVTRIYLPPDVNSLLSVADHCLRSQNYINVIVSDKQLHLQFMDMDAAIAHCTEGLGIWEWASNDEGQEPDVVMACAGDIPTLEALAATALLREEFPELKIRFINVVDLFKLQPESEHPHGLSDKDFDSLFTRDKPVIFNFHGYPWLIHRLAYRRTNHANMHVRGYKEKGNINTPLELAINNQIDRFSLAIDVIDRIPEIAVSGAHAKARFRKQQIACRQYAYEHGVDMPEVAGWRWPG.

This sequence belongs to the XFP family. The cofactor is thiamine diphosphate.

The polypeptide is Probable phosphoketolase (Methylococcus capsulatus (strain ATCC 33009 / NCIMB 11132 / Bath)).